Consider the following 417-residue polypeptide: Serine hydroxymethyltransferase (417 aa).

Residues L121 and 125-127 each bind (6S)-5,6,7,8-tetrahydrofolate; that span reads GHL. Residue K229 is modified to N6-(pyridoxal phosphate)lysine. 355 to 357 provides a ligand contact to (6S)-5,6,7,8-tetrahydrofolate; sequence SPF.

This sequence belongs to the SHMT family. As to quaternary structure, homodimer. Pyridoxal 5'-phosphate serves as cofactor.

It localises to the cytoplasm. The enzyme catalyses (6R)-5,10-methylene-5,6,7,8-tetrahydrofolate + glycine + H2O = (6S)-5,6,7,8-tetrahydrofolate + L-serine. Its pathway is one-carbon metabolism; tetrahydrofolate interconversion. The protein operates within amino-acid biosynthesis; glycine biosynthesis; glycine from L-serine: step 1/1. In terms of biological role, catalyzes the reversible interconversion of serine and glycine with tetrahydrofolate (THF) serving as the one-carbon carrier. This reaction serves as the major source of one-carbon groups required for the biosynthesis of purines, thymidylate, methionine, and other important biomolecules. Also exhibits THF-independent aldolase activity toward beta-hydroxyamino acids, producing glycine and aldehydes, via a retro-aldol mechanism. The sequence is that of Serine hydroxymethyltransferase from Yersinia pestis bv. Antiqua (strain Antiqua).